Here is a 334-residue protein sequence, read N- to C-terminus: Broad-range acid phosphatase DET1 (334 aa).

The active-site Tele-phosphohistidine intermediate is the His32. Substrate contacts are provided by residues Asn38, 44-45, and Arg108; that span reads NG. Glu126 (proton donor/acceptor) is an active-site residue. Residues 168-171 and 195-205 contribute to the substrate site; these read LNNT and RVKDEPRIREQ. Phosphoserine is present on Ser248.

The protein belongs to the phosphoglycerate mutase family.

The protein localises to the cytoplasm. The protein resides in the nucleus. Functionally, metal-independent, broad-range acid phosphatase. Involved, either directly or indirectly, in the bidirectional transport of sterols between the endoplasmic reticulum and the plasma membrane. In Saccharomyces cerevisiae (strain ATCC 204508 / S288c) (Baker's yeast), this protein is Broad-range acid phosphatase DET1 (DET1).